The following is a 1244-amino-acid chain: Alpha-protein kinase 1 (1244 aa).

ADP-D-glycero-beta-D-manno-heptose is bound by residues Phe-61, Gln-67, Arg-116, 150 to 153 (RQAR), Asp-231, Lys-233, 236 to 237 (ST), and Phe-295. 4 disordered regions span residues 650–675 (LQEP…TPFS), 701–737 (VRNM…THPS), 757–798 (VKDR…TEDA), and 824–848 (NWPV…DPDA). The span at 652 to 675 (EPNNDNLEPSQNQPQQQMPLTPFS) shows a compositional bias: polar residues. The segment covering 713–726 (SRPSYRSASWSSDS) has biased composition (low complexity). Over residues 757–771 (VKDRQGKEQGEEISE) the composition is skewed to basic and acidic residues. Positions 787-798 (PEGETAESTEDA) are enriched in acidic residues. Residues 1017-1237 (KYSKKSELWT…ICHRLSLTRP (221 aa)) enclose the Alpha-type protein kinase domain.

This sequence belongs to the protein kinase superfamily. Alpha-type protein kinase family. ALPK subfamily. Highly expressed in liver. Expressed in the optic nerve and retinal pigmented epithelium. Lower expression is observed in the macula and extramacular retina.

Its subcellular location is the cytoplasm. The protein localises to the cytosol. It is found in the cytoskeleton. The protein resides in the spindle pole. It localises to the microtubule organizing center. Its subcellular location is the centrosome. The protein localises to the cell projection. It is found in the cilium. It carries out the reaction L-seryl-[protein] + ATP = O-phospho-L-seryl-[protein] + ADP + H(+). It catalyses the reaction L-threonyl-[protein] + ATP = O-phospho-L-threonyl-[protein] + ADP + H(+). Serine/threonine-protein kinase activity is stimulated upon ADP-D-glycero-beta-D-manno-heptose (ADP-Heptose)-binding. Serine/threonine-protein kinase that detects bacterial pathogen-associated molecular pattern metabolites (PAMPs) and initiates an innate immune response, a critical step for pathogen elimination and engagement of adaptive immunity. Specifically recognizes and binds ADP-D-glycero-beta-D-manno-heptose (ADP-Heptose), a potent PAMP present in all Gram-negative and some Gram-positive bacteria. ADP-Heptose-binding stimulates its kinase activity to phosphorylate and activate TIFA, triggering pro-inflammatory NF-kappa-B signaling. May be involved in monosodium urate monohydrate (MSU)-induced inflammation by mediating phosphorylation of unconventional myosin MYO9A. May also play a role in apical protein transport by mediating phosphorylation of unconventional myosin MYO1A. May play a role in ciliogenesis. The chain is Alpha-protein kinase 1 from Homo sapiens (Human).